The following is a 157-amino-acid chain: DNA gyrase inhibitor (157 aa).

This sequence belongs to the DNA gyrase inhibitor family. As to quaternary structure, interacts with DNA gyrase.

The protein localises to the cytoplasm. Inhibits the supercoiling activity of DNA gyrase. Acts by inhibiting DNA gyrase at an early step, prior to (or at the step of) binding of DNA by the gyrase. It protects cells against toxins that target DNA gyrase, by inhibiting activity of these toxins and reducing the formation of lethal double-strand breaks in the cell. In Citrobacter rodentium (strain ICC168) (Citrobacter freundii biotype 4280), this protein is DNA gyrase inhibitor.